Reading from the N-terminus, the 66-residue chain is Beta-mammal toxin Cv2 (66 aa).

The LCN-type CS-alpha/beta domain occupies 1–66 (KEGYIVNHST…VWPLPKKTCN (66 aa)). 4 disulfide bridges follow: Cys12-Cys65, Cys16-Cys41, Cys25-Cys46, and Cys29-Cys48.

As to expression, expressed by the venom gland.

It is found in the secreted. Is susceptible to be slightly neutralized by human antibodies scFvs 10FG2. Beta toxins bind voltage-independently at site-4 of sodium channels (Nav) and reduces peak current and shifts the voltage of activation toward more negative potentials thereby affecting sodium channel activation and promoting spontaneous and repetitive firing. This toxin is slightly toxic to mice. The sequence is that of Beta-mammal toxin Cv2 from Centruroides villegasi (Scorpion).